We begin with the raw amino-acid sequence, 803 residues long: Pesticidal crystal protein Cry13Aa (803 aa).

This sequence belongs to the delta endotoxin family.

Functionally, endotoxin with nematicidal activity. The sequence is that of Pesticidal crystal protein Cry13Aa (cry13Aa) from Bacillus thuringiensis.